The chain runs to 2074 residues: Cell adhesion molecule Dscam2 (2074 aa).

The N-terminal stretch at 1 to 21 (MWISSRFFVILLLLNLDNTCS) is a signal peptide. Residues 22-1619 (EPFEAHLRGP…QTTVIFANIN (1598 aa)) are Extracellular-facing. Ig-like C2-type domains lie at 31–120 (PGFV…RIVS), 238–326 (PSVV…LRLT), 330–417 (PIQV…AELQ), 422–516 (PPVL…ARLN), 521–607 (PYIR…GEVT), 612–698 (PSIE…IKYT), 707–802 (PRWI…LKVN), and 805–902 (PYFS…LQVQ). Disulfide bonds link Cys53–Cys109, Cys259–Cys310, Cys352–Cys400, Cys444–Cys500, Cys541–Cys590, Cys633–Cys686, Cys728–Cys783, and Cys826–Cys884. 4 consecutive Fibronectin type-III domains span residues 907–1003 (PPSV…TEPQ), 1008–1108 (PPLS…TMED), 1113–1211 (PPED…SEED), and 1215–1311 (APAD…TNRI). An Ig-like C2-type 9 domain is found at 1312–1400 (PARIISFGGP…DRLTHTLIVQ (89 aa)). The cysteines at positions 1334 and 1382 are disulfide-linked. Fibronectin type-III domains are found at residues 1402-1495 (PPTA…TQGQ) and 1496-1595 (SPGH…TKDG). The chain crosses the membrane as a helical span at residues 1620–1640 (LLIPTIAAVSGMFCTIIMIIV). The Cytoplasmic segment spans residues 1641 to 2074 (CYRHMLKNAP…KFFTAPTLPK (434 aa)). 4 disordered regions span residues 1739 to 1766 (EGCS…HQRP), 1778 to 1917 (PFHN…KSIS), 1936 to 1974 (SPSI…SLKQ), and 2011 to 2074 (PSSQ…TLPK). Over residues 1757–1766 (THHHHHHQRP) the composition is skewed to basic residues. Positions 1831-1846 (AQSSTSSDLSPMSEQK) are enriched in polar residues. Basic residues predominate over residues 1848–1858 (LPRRGRSRYHH). Residues 1859–1868 (QQYQFSTNTT) show a composition bias toward polar residues. Composition is skewed to low complexity over residues 1875 to 1903 (NKMN…SNSN), 1942 to 1974 (QQQK…SLKQ), and 2036 to 2051 (SQQS…QQHP). The span at 2055 to 2066 (LNPSTAMLSSKF) shows a compositional bias: polar residues.

The protein localises to the membrane. Cell adhesion molecule. The chain is Cell adhesion molecule Dscam2 (Dscam2) from Drosophila melanogaster (Fruit fly).